A 510-amino-acid polypeptide reads, in one-letter code: Fumarate hydratase, mitochondrial (510 aa).

The N-terminal 44 residues, 1-44, are a transit peptide targeting the mitochondrion; sequence MYRALRLLARSRPLVRAPAAALASAPGLGGAAVPSFWPPNAARM. Lysine 61, lysine 66, and lysine 80 each carry N6-acetyllysine; alternate. N6-succinyllysine; alternate occurs at positions 61, 66, and 80. Phosphothreonine is present on residues threonine 85 and threonine 90. An N6-acetyllysine modification is found at lysine 94. Lysine 115 and lysine 122 each carry N6-acetyllysine; alternate. Residues lysine 115 and lysine 122 each carry the N6-succinyllysine; alternate modification. Residues 145–147, 176–179, and 186–188 contribute to the substrate site; these read SGT, HPND, and SSN. N6-acetyllysine is present on lysine 213. Lysine 223 carries the post-translational modification N6-acetyllysine; alternate. N6-succinyllysine; alternate is present on lysine 223. Position 234 (threonine 234) interacts with substrate. The Proton donor/acceptor role is filled by histidine 235. Position 236 is a phosphothreonine; by PRKDC (threonine 236). Lysine 256 is subject to N6-acetyllysine. Lysine 292 carries the post-translational modification N6-acetyllysine; alternate. Lysine 292 is subject to N6-succinyllysine; alternate. Residue serine 365 is part of the active site. Substrate is bound by residues serine 366 and 371 to 373; that span reads KVN. Serine 366 carries the post-translational modification Phosphoserine. N6-succinyllysine is present on residues lysine 467 and lysine 473. Position 502 is an N6-acetyllysine (lysine 502).

It belongs to the class-II fumarase/aspartase family. Fumarase subfamily. Homotetramer. Interacts with H2AZ1. In terms of processing, phosphorylation at Thr-236 by PRKDC in response to DNA damage promotes translocation to the nucleus and recruitment to DNA double-strand breaks (DSBs). As to expression, expressed in red blood cells; underexpressed in red blood cells (cytoplasm) of patients with hereditary non-spherocytic hemolytic anemia of unknown etiology.

It is found in the mitochondrion. The protein resides in the cytoplasm. Its subcellular location is the cytosol. The protein localises to the nucleus. It localises to the chromosome. It catalyses the reaction (S)-malate = fumarate + H2O. It functions in the pathway carbohydrate metabolism; tricarboxylic acid cycle; (S)-malate from fumarate: step 1/1. Catalyzes the reversible stereospecific interconversion of fumarate to L-malate. Experiments in other species have demonstrated that specific isoforms of this protein act in defined pathways and favor one direction over the other. In terms of biological role, catalyzes the hydration of fumarate to L-malate in the tricarboxylic acid (TCA) cycle to facilitate a transition step in the production of energy in the form of NADH. Functionally, catalyzes the dehydration of L-malate to fumarate. Fumarate metabolism in the cytosol plays a role during urea cycle and arginine metabolism; fumarate being a by-product of the urea cycle and amino-acid catabolism. Also plays a role in DNA repair by promoting non-homologous end-joining (NHEJ). In response to DNA damage and phosphorylation by PRKDC, translocates to the nucleus and accumulates at DNA double-strand breaks (DSBs): acts by catalyzing formation of fumarate, an inhibitor of KDM2B histone demethylase activity, resulting in enhanced dimethylation of histone H3 'Lys-36' (H3K36me2). The chain is Fumarate hydratase, mitochondrial from Homo sapiens (Human).